Reading from the N-terminus, the 228-residue chain is MVVEDTPKSIITDDQITTNPNRVIEDDNNLEEGEILDEDDSSATSKPVVHQPHLLENSWTFLFDTPAAKSKQDDWGSSMRPIYTFSTVEEFWSIYNNIHHPGKLAVRADFYCFKHKIEPKWEDPICANGGKWTANYPKGKSDTSWLYTLLAMIGEQFDHGDEICGAVVKVRGRAEKISIWTKNASNEAAQVSIGKQWKEFLDYNETMGFIFHDDARKLDRNAKNKYVV.

EIF4G-binding regions lie at residues 53–56 and 63–99; these read HLLE and FDTP…NNIH. Residues 71–76, K103, and 121–122 each bind mRNA; these read KQDDWG and WE. A disulfide bond links C126 and C164. The tract at residues 147–156 is EIF4G-binding; sequence YTLLAMIGEQ. Residues 171–176 and 216–220 each bind mRNA; these read RGRAEK and RKLDR.

This sequence belongs to the eukaryotic initiation factor 4E family. As to quaternary structure, EIF4F is a multi-subunit complex, the composition of which varies with external and internal environmental conditions. It is composed of at least EIF4A, EIF4E and EIF4G. EIF4E is also known to interact with other partners. In higher plants two isoforms of EIF4F have been identified, named isoform EIF4F and isoform EIF(iso)4F. Isoform EIF4F has subunits p220 and p26, whereas isoform EIF(iso)4F has subunits p82 and p28. (Microbial infection) Interacts with potyvirus viral genome-linked protein (VPg); this interaction is possible in susceptible hosts but impaired in resistant plants. According to the redox status, the Cys-126-Cys-164 disulfide bridge may have a role in regulating protein function by affecting its ability to bind capped mRNA.

It is found in the nucleus. It localises to the cytoplasm. In terms of biological role, component of the protein complex eIF4F, which is involved in the recognition of the mRNA cap, ATP-dependent unwinding of 5'-terminal secondary structure and recruitment of mRNA to the ribosome. Recognizes and binds the 7-methylguanosine-containing mRNA cap during an early step in the initiation of protein synthesis and facilitates ribosome binding by inducing the unwinding of the mRNAs secondary structures. Key component of recessive resistance to potyviruses. Functionally, (Microbial infection) Susceptibility host factor required for viral infection by recruiting viral RNAs to the host ribosomal complex via an interaction with viral genome-linked protein (VPg). Also seems to be involved in virus movement from cell-to-cell. The polypeptide is Eukaryotic translation initiation factor 4E-1 (Pisum sativum (Garden pea)).